A 131-amino-acid polypeptide reads, in one-letter code: Protein FAM107B (131 aa).

Ala-2 is modified (N-acetylalanine). Disordered stretches follow at residues 39–78 and 100–131; these read MNQK…KKKS and KLQE…AQES. Lys-50 is modified (N6-acetyllysine). Basic and acidic residues predominate over residues 52–78; the sequence is ELQKVMEKRKRDQVIKQKEEEAQKKKS. Residues 61 to 112 are a coiled coil; the sequence is KRDQVIKQKEEEAQKKKSDLEIELLKRQQKLEQLELEKQKLQEEQENAPEFV.

The protein belongs to the FAM107 family.

This Homo sapiens (Human) protein is Protein FAM107B.